Here is a 335-residue protein sequence, read N- to C-terminus: MNQFYKRHFLRLLDFTPAEIIALLDLATELKKDKKSGCEQQKLVGKNIALIFEKDSTRTRCSFEVAAYDQGARVTYLGPGGSQIGHKESIKDTARVLGRMYDGIQYRGYGQRVVETLAEFAGVPVWNGLTDEFHPTQLLADLLTMREHLPNKSLNKMTLAYLGDTRNNMGNSLLEAAALVGMDLRLVAPKACWPEEAFVISCQALAQKTGGKITLTEDIAEGVNGADFLYTDVWVSMGEPKEVWQERINLLKPYQVNMRVLTLTGNPQVKFLHCLPAFHDDQTTIGKQMAEQYDLPGGMEVTEEVFESAHSIVFDQAENRLHTIKAVMVATMSKI.

Carbamoyl phosphate contacts are provided by residues 56 to 59 (STRT), glutamine 83, arginine 107, and 134 to 137 (HPTQ). Residues asparagine 168, aspartate 232, and 236-237 (SM) contribute to the L-ornithine site. Residues 274 to 275 (CL) and arginine 320 each bind carbamoyl phosphate.

Belongs to the aspartate/ornithine carbamoyltransferase superfamily. OTCase family.

Its subcellular location is the cytoplasm. The catalysed reaction is carbamoyl phosphate + L-ornithine = L-citrulline + phosphate + H(+). The protein operates within amino-acid biosynthesis; L-arginine biosynthesis; L-arginine from L-ornithine and carbamoyl phosphate: step 1/3. In terms of biological role, reversibly catalyzes the transfer of the carbamoyl group from carbamoyl phosphate (CP) to the N(epsilon) atom of ornithine (ORN) to produce L-citrulline. This is Ornithine carbamoyltransferase from Yersinia pestis bv. Antiqua (strain Nepal516).